We begin with the raw amino-acid sequence, 938 residues long: Probable glutamyl endopeptidase, chloroplastic (938 aa).

Residues 1–54 (MSSLTILLQRACLRFALLPVPPLRAPLRPPRRPLGLPRRSAMSSSAASRLSHIV) constitute a chloroplast transit peptide. A compositionally biased stretch (low complexity) spans 58–76 (GGAAGESSEPPAAAAAASG). Residues 58–77 (GGAAGESSEPPAAAAAASGL) are disordered. Catalysis depends on charge relay system residues serine 762, aspartate 836, and histidine 870. Residues 897 to 913 (SSKTDSDSVADTENKTV) show a composition bias toward polar residues. Positions 897–938 (SSKTDSDSVADTENKTVSASGGGAPCEGPEAEGFSSMQRSLL) are disordered.

The protein belongs to the peptidase S9D family.

The protein resides in the plastid. The protein localises to the chloroplast stroma. Serine-type protease active in vitro against the LHCII N-terminal. Cleaves its substrate on the carboxy-side of Glu residues. The sequence is that of Probable glutamyl endopeptidase, chloroplastic (GEP) from Oryza sativa subsp. japonica (Rice).